The chain runs to 210 residues: S-norcoclaurine synthase (210 aa).

The signal sequence occupies residues 1-19 (MMKMEVVFVFLMLLGTINC). Residue 108-110 (YKE) participates in dopamine binding. Lys122 functions as the Proton donor in the catalytic mechanism. Residue Asp141 coordinates (4-hydroxyphenyl)acetaldehyde.

The protein belongs to the BetVI family. As to quaternary structure, concentration-dependent dimerization, but mainly monomeric at concentrations around 10 uM. Expressed most abundantly in the rhizomes and to a lesser extent in petioles, roots, leaves and flower buds.

It catalyses the reaction (4-hydroxyphenyl)acetaldehyde + dopamine = (S)-norcoclaurine + H2O. Involved in the biosynthesis of the common precursor of all benzylisoquinoline alkaloids such as morphine, sanguinarine, codeine or berberine. Condenses dopamine and 4-hydroxyphenylacetaldehyde. In Thalictrum flavum subsp. glaucum (Yellow meadow rue), this protein is S-norcoclaurine synthase.